The primary structure comprises 786 residues: Endonuclease MutS2 (786 aa).

332–339 (GPNTGGKT) provides a ligand contact to ATP. The Smr domain occupies 711-786 (IDLRGMDSEE…GTGVTVVILK (76 aa)).

It belongs to the DNA mismatch repair MutS family. MutS2 subfamily. Homodimer. Binds to stalled ribosomes, contacting rRNA.

Endonuclease that is involved in the suppression of homologous recombination and thus may have a key role in the control of bacterial genetic diversity. In terms of biological role, acts as a ribosome collision sensor, splitting the ribosome into its 2 subunits. Detects stalled/collided 70S ribosomes which it binds and splits by an ATP-hydrolysis driven conformational change. Acts upstream of the ribosome quality control system (RQC), a ribosome-associated complex that mediates the extraction of incompletely synthesized nascent chains from stalled ribosomes and their subsequent degradation. Probably generates substrates for RQC. The protein is Endonuclease MutS2 of Clostridium perfringens (strain 13 / Type A).